A 349-amino-acid polypeptide reads, in one-letter code: MVLLPWELEEDILSRLPPRSLVQFRSVCKRWNALFDVKSFNKDQFARARPQFIFITDSKIYSIEIIGLDGVDPTIKLHVLDSSGIPYREWKFAYLTITACDGRWIKWIEYENKGFNVCGVGYDNTRPEKVYKILEYLECRREESSNACYQRVAIYECASHAFKFIDTSNKVWFISDVQRYSVCLNGNLYWLSFDDFRILCFDFSREIVKPFCLLPCRKFDKCDLLALQVFKGDRLSLLNQCCKTRTIEIWVTKKKIDSSNNNGSDEVVWISLLTLPPNNLPNLFIVCYGISYFIYDKTTLIIYCEDENTSAACIYIIRGDLFKKFEIDSSAFFCYHCVYAPNFIPLPLM.

The 48-residue stretch at 1–48 (MVLLPWELEEDILSRLPPRSLVQFRSVCKRWNALFDVKSFNKDQFARA) folds into the F-box domain. The LRR repeat unit spans residues 267-290 (VVWISLLTLPPNNLPNLFIVCYGI).

This chain is Putative F-box/LRR-repeat protein At3g16555, found in Arabidopsis thaliana (Mouse-ear cress).